A 273-amino-acid polypeptide reads, in one-letter code: 4-hydroxy-tetrahydrodipicolinate reductase (273 aa).

Residues 11–16 and 106–108 contribute to the NAD(+) site; these read GATGKM and GTT. The Proton donor/acceptor role is filled by H162. H163 contacts (S)-2,3,4,5-tetrahydrodipicolinate. The Proton donor role is filled by K166. (S)-2,3,4,5-tetrahydrodipicolinate is bound at residue 172–173; that stretch reads GT.

Belongs to the DapB family.

The protein localises to the cytoplasm. The enzyme catalyses (S)-2,3,4,5-tetrahydrodipicolinate + NAD(+) + H2O = (2S,4S)-4-hydroxy-2,3,4,5-tetrahydrodipicolinate + NADH + H(+). It carries out the reaction (S)-2,3,4,5-tetrahydrodipicolinate + NADP(+) + H2O = (2S,4S)-4-hydroxy-2,3,4,5-tetrahydrodipicolinate + NADPH + H(+). It functions in the pathway amino-acid biosynthesis; L-lysine biosynthesis via DAP pathway; (S)-tetrahydrodipicolinate from L-aspartate: step 4/4. Functionally, catalyzes the conversion of 4-hydroxy-tetrahydrodipicolinate (HTPA) to tetrahydrodipicolinate. In Synechococcus sp. (strain ATCC 27144 / PCC 6301 / SAUG 1402/1) (Anacystis nidulans), this protein is 4-hydroxy-tetrahydrodipicolinate reductase.